The following is a 180-amino-acid chain: MKRSIIAAAVFSSFFMSAGVFAADVDTGTLTIKGNIAESPCKFEAGGDSVSINMPTVPTSVFEGKAKYSTYDDAVGVTSSMLKISCPKEVAGVKLSLITNDKITGNDKAIASSNDTVGYYLYLGDNSDVLDVSAPFNIESYKTAEGQYAIPFKAKYLKLTDNSVQSGDVLSSLVMRVAQD.

A signal peptide spans 1 to 22 (MKRSIIAAAVFSSFFMSAGVFA).

The protein belongs to the fimbrial protein family.

Part of the yehABCD fimbrial operon. Could contribute to adhesion to various surfaces in specific environmental niches. This is an uncharacterized protein from Escherichia coli (strain K12).